The sequence spans 34 residues: Small ribosomal subunit protein uS2c (34 aa).

The protein belongs to the universal ribosomal protein uS2 family.

It localises to the plastid. Its subcellular location is the chloroplast. This Ochrosphaera neapolitana protein is Small ribosomal subunit protein uS2c (rps2).